Consider the following 1172-residue polypeptide: Structural maintenance of chromosomes protein 2 (1172 aa).

32 to 39 (GLNGSGKS) provides a ligand contact to ATP. 2 coiled-coil regions span residues 172–204 (RMFE…EEIE) and 258–507 (SHIA…AYME). The SMC hinge domain occupies 520 to 640 (SKVKGLVAQL…CDTPESAKKV (121 aa)). The stretch at 676–941 (LLQIQKLNSL…INHLEKENDW (266 aa)) forms a coiled coil.

This sequence belongs to the SMC family. SMC2 subfamily. As to quaternary structure, forms a heterodimer with cut3/smc4. Component of the condensin complex, which contains the cut3 and cut14 heterodimer, and three non smc subunits that probably regulate the complex: cnd1, cnd2 and cnd3.

Its subcellular location is the nucleus. It is found in the cytoplasm. It localises to the chromosome. Functionally, central component of the condensin complex, a complex required for conversion of interphase chromatin into mitotic-like condense chromosomes. The condensin complex probably introduces positive supercoils into relaxed DNA in the presence of type I topoisomerases and converts nicked DNA into positive knotted forms in the presence of type II topoisomerases. This chain is Structural maintenance of chromosomes protein 2 (cut14), found in Schizosaccharomyces pombe (strain 972 / ATCC 24843) (Fission yeast).